The sequence spans 227 residues: MKQSSSIIILVSGGMDSAALLWLAKKEFDKVYAVSFDYGQKHRVELDFAKKLTEEAGVEEHFIAEVPHLKGIKGSALTDRSVEIPSEEYPEGPPVTTVPMRNLNFLSIAASFADIYEIENIGIGVHSVDSPYPDCRAEFVSAAEAAINASSVMVAKKKNRITVYTPFLGMTKTDVLRIGLELGVPYEKTYSCYRGTIPPCGECATCRQRIEAFRSVGLEDPWFKKER.

11–21 (VSGGMDSAALL) is an ATP binding site. Positions 192, 200, 203, and 206 each coordinate Zn(2+).

It belongs to the QueC family. Zn(2+) is required as a cofactor.

The catalysed reaction is 7-carboxy-7-deazaguanine + NH4(+) + ATP = 7-cyano-7-deazaguanine + ADP + phosphate + H2O + H(+). It participates in purine metabolism; 7-cyano-7-deazaguanine biosynthesis. Catalyzes the ATP-dependent conversion of 7-carboxy-7-deazaguanine (CDG) to 7-cyano-7-deazaguanine (preQ(0)). The chain is 7-cyano-7-deazaguanine synthase from Persephonella marina (strain DSM 14350 / EX-H1).